The sequence spans 62 residues: UPF0434 protein Arad_4458 (62 aa).

The protein belongs to the UPF0434 family.

This Rhizobium rhizogenes (strain K84 / ATCC BAA-868) (Agrobacterium radiobacter) protein is UPF0434 protein Arad_4458.